A 470-amino-acid chain; its full sequence is Cupincin (470 aa).

An N-terminal signal peptide occupies residues 1–34; the sequence is MAKKKTSSSMARSQLAALLISLCFLSLASNAVGW. Basic and acidic residues predominate over residues 36-52; it reads RRGEREEEDERRRHGGE. Disordered regions lie at residues 36–57 and 240–261; these read RRGE…GRPY and KSCS…PSSL. Cupin type-1 domains are found at residues 57–215 and 259–445; these read YHFG…EELE and SSLT…AREA. Asparagine 297 is a glycosylation site (N-linked (GlcNAc...) asparagine). Residues 330–368 are disordered; that stretch reads PHVSGGGSSERREREREHGRRREEEQGEEEHGERGEKAR. The segment covering 338–367 has biased composition (basic and acidic residues); sequence SERREREREHGRRREEEQGEEEHGERGEKA. Zn(2+)-binding residues include histidine 347, glutamate 352, and histidine 360.

The protein belongs to the 7S seed storage protein family. As to quaternary structure, homotrimer. It depends on Zn(2+) as a cofactor.

The protein resides in the secreted. Functionally, seed storage protein. Globulin-like protein that acts as a zinc metalloprotease. Cleaves specifically between Leu-15 and Tyr-16 of insulin B chain, and Gln-1 and Leu-2 of neurotensin (NT) peptide in vitro. May play a role as an initiating endopeptidase in germinating seeds. The chain is Cupincin from Oryza sativa subsp. indica (Rice).